A 289-amino-acid polypeptide reads, in one-letter code: F-box protein PP2-B15 (289 aa).

In terms of domain architecture, F-box spans 1–43 (MMLPEACVATILSFTTPADTISSAAVSSVFRVAGDSDFVWEKF).

The chain is F-box protein PP2-B15 (PP2B15) from Arabidopsis thaliana (Mouse-ear cress).